A 494-amino-acid polypeptide reads, in one-letter code: MKGFLSLTLLPLLVAASPVAVNSIHNDAAPILSSMTSKDIPDSYIVVFKKHVDPSSASAHQSWLQEVHTAHTGRMELKKRSLFGFDFEAFMGLKHTFHIAGSLLGYAGHFHEDVIEQIRRHPDVDYIEKDSEVRTMSEGSVEKNAPWGLARISHRESLSFGNFNKYLYAEEGGEGVDAYVIDTGANVKHVDFEGRANWGKTIPQGDADEDGNGHGTHCSGTIAGKKFGVAKKANVYAVKVLRSNGSGTMSDVVKGVEWAAEAHIKKSKKGDKKFKGSVANMSLGGGSSRTLDLAVNAAVDAGIHFAVAAGNDNADACNYSPAAAEKAITVGASTLADERAYFSNYGKCTDIFAPGLNILSTWVGSDHATNTISGTSMASPHIAGLLAYYVSLAPAKDSAYAVADVTPKQLKAALISVATEGTLTDIPSDTPNLLAWNGGGSANYTKILADGGYKAHNAETTVEDRIGIIIDSAEKAFHKELGAIYSEIKDAVSV.

An N-terminal signal peptide occupies residues 1 to 16 (MKGFLSLTLLPLLVAA). Residues 17-136 (SPVAVNSIHN…IEKDSEVRTM (120 aa)) constitute a propeptide, removed in mature form. The Inhibitor I9 domain maps to 43-136 (SYIVVFKKHV…IEKDSEVRTM (94 aa)). The 303-residue stretch at 146 to 448 (PWGLARISHR…GGSANYTKIL (303 aa)) folds into the Peptidase S8 domain. IgE-binding regions lie at residues 180-198 (VIDTGANVKHVDFEGRANW) and 209-231 (EDGNGHGTHCSGTIAGKKFGVAK). Residues aspartate 182 and histidine 214 each act as charge relay system in the active site. Residues asparagine 244 and asparagine 280 are each glycosylated (N-linked (GlcNAc...) asparagine). Serine 376 functions as the Charge relay system in the catalytic mechanism. Asparagine 443 is a glycosylation site (N-linked (GlcNAc...) asparagine). Positions 454–494 (KAHNAETTVEDRIGIIIDSAEKAFHKELGAIYSEIKDAVSV) are cleaved as a propeptide — removed in mature form.

It belongs to the peptidase S8 family.

Functionally, serine protease. In Penicillium rubens, this protein is Subtilisin-like serine protease Pen ch 18.0101.